We begin with the raw amino-acid sequence, 81 residues long: uncharacterized protein (81 aa).

This is an uncharacterized protein from Carnobacterium maltaromaticum (Carnobacterium piscicola).